The sequence spans 151 residues: Ribonuclease H (151 aa).

An RNase H type-1 domain is found at M1–D141. 4 residues coordinate Mg(2+): D9, E47, D69, and D133.

It belongs to the RNase H family. Monomer. Requires Mg(2+) as cofactor.

The protein localises to the cytoplasm. It catalyses the reaction Endonucleolytic cleavage to 5'-phosphomonoester.. Endonuclease that specifically degrades the RNA of RNA-DNA hybrids. The sequence is that of Ribonuclease H from Alcanivorax borkumensis (strain ATCC 700651 / DSM 11573 / NCIMB 13689 / SK2).